A 347-amino-acid polypeptide reads, in one-letter code: Protein RecA (347 aa).

G64 to T71 serves as a coordination point for ATP. The interval D328 to K347 is disordered.

This sequence belongs to the RecA family.

It localises to the cytoplasm. In terms of biological role, can catalyze the hydrolysis of ATP in the presence of single-stranded DNA, the ATP-dependent uptake of single-stranded DNA by duplex DNA, and the ATP-dependent hybridization of homologous single-stranded DNAs. It interacts with LexA causing its activation and leading to its autocatalytic cleavage. The polypeptide is Protein RecA (Oceanobacillus iheyensis (strain DSM 14371 / CIP 107618 / JCM 11309 / KCTC 3954 / HTE831)).